Consider the following 436-residue polypeptide: Two-pore potassium channel 3 (436 aa).

Residues Met1–Ser148 are Cytoplasmic-facing. The interval Ser62–Ala117 is disordered. Residues Pro71–Pro92 show a composition bias toward low complexity. The span at Leu93–Glu102 shows a compositional bias: pro residues. Residues Val149–Trp169 traverse the membrane as a helical segment. An intramembrane region (pore-forming) is located at residues Asp185 to Pro204. Residues Phe212–Val232 form a helical membrane-spanning segment. Topologically, residues Ser233–Val274 are cytoplasmic. Residues Ala275 to Ile295 form a helical membrane-spanning segment. The pore-forming intramembrane region spans Asp302 to Phe321. The helical transmembrane segment at Leu328 to Leu348 threads the bilayer. Over Ala349 to Asp436 the chain is Cytoplasmic. 2 EF-hand domains span residues Leu365–Lys400 and Lys404–Asp436. Positions 378, 380, 382, 384, 389, 417, 421, 423, and 428 each coordinate Ca(2+).

The protein belongs to the two pore domain potassium channel (TC 1.A.1.7) family. In terms of assembly, homodimer. Expressed in roots, cotyledons, stems, hypocotyls, leaves and flowers. Detected in root tips and in mesophyll cells and guard cells of the leaves.

It localises to the vacuole membrane. It is found in the plastid. Its subcellular location is the chloroplast thylakoid membrane. With respect to regulation, inhibited by barium, but not by tetraethylammonium. In terms of biological role, two-pore potassium channel modulating the proton motive force (pmf) necessary to convert photochemical energy into physiological functions. Mediates the potassium efflux from the thylakoid lumen required for the regulation of the transmembrane electrical potential, the enhancement of the pH gradient for ATP synthesis, the regulation of electron flow, and pH-mediated photoprotective responses. Requires calcium for channel activity. In Arabidopsis thaliana (Mouse-ear cress), this protein is Two-pore potassium channel 3.